Reading from the N-terminus, the 359-residue chain is Spore germination protein GerQC (359 aa).

Positions 1 to 16 are cleaved as a signal peptide; it reads MKRWILFLILSVFLIG. A lipid anchor (N-palmitoyl cysteine) is attached at Cys-17. The S-diacylglycerol cysteine moiety is linked to residue Cys-17.

It belongs to the GerABKC lipoprotein family.

It is found in the membrane. In terms of biological role, required for the germination response to inosine. Has no role in L-alanine germination. This chain is Spore germination protein GerQC (gerQC), found in Bacillus cereus.